We begin with the raw amino-acid sequence, 153 residues long: Large ribosomal subunit protein uL15 (153 aa).

The segment at 21 to 41 is disordered; the sequence is RGIGSGKGKTGGRGIKGQKSR. Gly residues predominate over residues 23 to 35; sequence IGSGKGKTGGRGI.

This sequence belongs to the universal ribosomal protein uL15 family. Part of the 50S ribosomal subunit.

Its function is as follows. Binds to the 23S rRNA. This is Large ribosomal subunit protein uL15 from Rickettsia massiliae (strain Mtu5).